A 317-amino-acid polypeptide reads, in one-letter code: Melanocyte-stimulating hormone receptor (317 aa).

The Extracellular segment spans residues 1–37 (MPMQGAQRKLLGSLNSTPTATSNLGLAANHTGAPCLE). The N-linked (GlcNAc...) asparagine glycan is linked to asparagine 29. The chain crosses the membrane as a helical span at residues 38-63 (VSIPDGLFLSLGLVSLVENVLVVAAI). Residues 64-72 (AKNRNLHSS) lie on the Cytoplasmic side of the membrane. Residues 73 to 93 (MYCFICCLALSDLLVSGSNML) form a helical membrane-spanning segment. The Extracellular portion of the chain corresponds to 94–118 (ETAVILLLEAGALATRTSAVQRLHN). A helical membrane pass occupies residues 119–140 (TIDVLTCSSMLCSLCFLGAIAV). At 141–163 (DRYISIFYALRYHSIVTLPRTQR) the chain is on the cytoplasmic side. Residues 164–183 (VIAAIWVASVLSSTLFITYY) form a helical membrane-spanning segment. Residues 184-191 (DHAAVLLC) are Extracellular-facing. The chain crosses the membrane as a helical span at residues 192–211 (LVVFFLAMLVLMAVLYVHML). At 212–240 (ARACQHAHGIIRLHKRQSPAHQGFGLRGA) the chain is on the cytoplasmic side. Residues 241–266 (ATLTILLGIFFLCWGPFFLHLTLVVF) traverse the membrane as a helical segment. The Extracellular portion of the chain corresponds to 267-279 (CPQHLTCSCIFKN). A helical membrane pass occupies residues 280–300 (FKVFLTLIICNTIIDPLIYAF). The Cytoplasmic segment spans residues 301 to 317 (RSQELRRTLKEVLLCSW). Cysteine 315 carries S-palmitoyl cysteine lipidation.

It belongs to the G-protein coupled receptor 1 family. Interacts with MGRN1, but does not undergo MGRN1-mediated ubiquitination; this interaction competes with GNAS-binding and thus inhibits agonist-induced cAMP production. Interacts with OPN3; the interaction results in a decrease in MC1R-mediated cAMP signaling and ultimately a decrease in melanin production in melanocytes.

The protein localises to the cell membrane. Receptor for MSH (alpha, beta and gamma) and ACTH. The activity of this receptor is mediated by G proteins which activate adenylate cyclase. Mediates melanogenesis, the production of eumelanin (black/brown) and phaeomelanin (red/yellow), via regulation of cAMP signaling in melanocytes. This Saguinus imperator (Emperor tamarin) protein is Melanocyte-stimulating hormone receptor (MC1R).